The chain runs to 494 residues: Ketol-acid reductoisomerase (NADP(+)) (494 aa).

The 195-residue stretch at 14–208 folds into the KARI N-terminal Rossmann domain; sequence LDQLGRCRFM…GGHRAGCLES (195 aa). NADP(+) is bound by residues 45 to 48, Arg68, Arg76, Ser78, and 108 to 110; these read CGAQ and DKQ. His132 is an active-site residue. Gly158 serves as a coordination point for NADP(+). KARI C-terminal knotted domains lie at 209-344 and 345-487; these read SFVA…NYPS and TDVE…MTDM. Mg(2+)-binding residues include Asp217, Glu221, Glu389, and Glu393. Residue Ser414 coordinates substrate.

It belongs to the ketol-acid reductoisomerase family. The cofactor is Mg(2+).

It carries out the reaction (2R)-2,3-dihydroxy-3-methylbutanoate + NADP(+) = (2S)-2-acetolactate + NADPH + H(+). It catalyses the reaction (2R,3R)-2,3-dihydroxy-3-methylpentanoate + NADP(+) = (S)-2-ethyl-2-hydroxy-3-oxobutanoate + NADPH + H(+). It participates in amino-acid biosynthesis; L-isoleucine biosynthesis; L-isoleucine from 2-oxobutanoate: step 2/4. Its pathway is amino-acid biosynthesis; L-valine biosynthesis; L-valine from pyruvate: step 2/4. In terms of biological role, involved in the biosynthesis of branched-chain amino acids (BCAA). Catalyzes an alkyl-migration followed by a ketol-acid reduction of (S)-2-acetolactate (S2AL) to yield (R)-2,3-dihydroxy-isovalerate. In the isomerase reaction, S2AL is rearranged via a Mg-dependent methyl migration to produce 3-hydroxy-3-methyl-2-ketobutyrate (HMKB). In the reductase reaction, this 2-ketoacid undergoes a metal-dependent reduction by NADPH to yield (R)-2,3-dihydroxy-isovalerate. The chain is Ketol-acid reductoisomerase (NADP(+)) from Vibrio vulnificus (strain CMCP6).